The following is a 304-amino-acid chain: Ribonuclease Z (304 aa).

Residues histidine 61, histidine 63, aspartate 65, histidine 66, histidine 138, aspartate 206, and histidine 265 each coordinate Zn(2+). Aspartate 65 functions as the Proton acceptor in the catalytic mechanism.

The protein belongs to the RNase Z family. Homodimer. It depends on Zn(2+) as a cofactor.

The catalysed reaction is Endonucleolytic cleavage of RNA, removing extra 3' nucleotides from tRNA precursor, generating 3' termini of tRNAs. A 3'-hydroxy group is left at the tRNA terminus and a 5'-phosphoryl group is left at the trailer molecule.. Its function is as follows. Zinc phosphodiesterase, which displays some tRNA 3'-processing endonuclease activity. Probably involved in tRNA maturation, by removing a 3'-trailer from precursor tRNA. The polypeptide is Ribonuclease Z (Lachnospira eligens (strain ATCC 27750 / DSM 3376 / VPI C15-48 / C15-B4) (Eubacterium eligens)).